A 626-amino-acid polypeptide reads, in one-letter code: Endoglucanase 19 (626 aa).

A signal peptide spans 1–23; the sequence is MGSRTTISILVVLLLGLVQLAIS. The active-site Nucleophile is D79. Residues H412, D464, and E473 contribute to the active site. A disordered region spans residues 515–536; it reads APVPQRKPTKPPAASSPSPITI. The segment covering 526–536 has biased composition (low complexity); it reads PAASSPSPITI. N560 and N622 each carry an N-linked (GlcNAc...) asparagine glycan.

Belongs to the glycosyl hydrolase 9 (cellulase E) family.

It localises to the secreted. The enzyme catalyses Endohydrolysis of (1-&gt;4)-beta-D-glucosidic linkages in cellulose, lichenin and cereal beta-D-glucans.. The chain is Endoglucanase 19 from Arabidopsis thaliana (Mouse-ear cress).